Consider the following 394-residue polypeptide: Phosphopentomutase (394 aa).

Asp-14, Asp-287, His-292, Asp-328, His-329, and His-340 together coordinate Mn(2+).

Belongs to the phosphopentomutase family. Mn(2+) serves as cofactor.

The protein resides in the cytoplasm. The enzyme catalyses 2-deoxy-alpha-D-ribose 1-phosphate = 2-deoxy-D-ribose 5-phosphate. It carries out the reaction alpha-D-ribose 1-phosphate = D-ribose 5-phosphate. It participates in carbohydrate degradation; 2-deoxy-D-ribose 1-phosphate degradation; D-glyceraldehyde 3-phosphate and acetaldehyde from 2-deoxy-alpha-D-ribose 1-phosphate: step 1/2. Its function is as follows. Isomerase that catalyzes the conversion of deoxy-ribose 1-phosphate (dRib-1-P) and ribose 1-phosphate (Rib-1-P) to deoxy-ribose 5-phosphate (dRib-5-P) and ribose 5-phosphate (Rib-5-P), respectively. This is Phosphopentomutase from Shouchella clausii (strain KSM-K16) (Alkalihalobacillus clausii).